The sequence spans 507 residues: ATP synthase subunit alpha (507 aa).

Residue 168–175 coordinates ATP; the sequence is GDRQTGKT.

Belongs to the ATPase alpha/beta chains family. F-type ATPases have 2 components, CF(1) - the catalytic core - and CF(0) - the membrane proton channel. CF(1) has five subunits: alpha(3), beta(3), gamma(1), delta(1), epsilon(1). CF(0) has three main subunits: a(1), b(2) and c(9-12). The alpha and beta chains form an alternating ring which encloses part of the gamma chain. CF(1) is attached to CF(0) by a central stalk formed by the gamma and epsilon chains, while a peripheral stalk is formed by the delta and b chains.

The protein localises to the cell membrane. It carries out the reaction ATP + H2O + 4 H(+)(in) = ADP + phosphate + 5 H(+)(out). Its function is as follows. Produces ATP from ADP in the presence of a proton gradient across the membrane. The alpha chain is a regulatory subunit. The chain is ATP synthase subunit alpha from Mesomycoplasma hyopneumoniae (strain 7448) (Mycoplasma hyopneumoniae).